The sequence spans 318 residues: tRNA uridine(34) hydroxylase (318 aa).

The Rhodanese domain maps to Glu-123–Glu-217. Cys-177 functions as the Cysteine persulfide intermediate in the catalytic mechanism.

Belongs to the TrhO family.

It catalyses the reaction uridine(34) in tRNA + AH2 + O2 = 5-hydroxyuridine(34) in tRNA + A + H2O. Catalyzes oxygen-dependent 5-hydroxyuridine (ho5U) modification at position 34 in tRNAs. This is tRNA uridine(34) hydroxylase from Staphylococcus aureus (strain USA300).